The primary structure comprises 319 residues: sn-1-specific diacylglycerol lipase ABHD11 (319 aa).

A mitochondrion-targeting transit peptide spans 1-28 (MTLKLAVLRQIFQGSKGWHLWQHWRAFY). Residues 69 to 304 (PPLVLLHGLF…GAGHWVHADK (236 aa)) form the AB hydrolase-1 domain. Catalysis depends on charge relay system residues serine 143, glutamate 239, and histidine 298.

This sequence belongs to the AB hydrolase superfamily. Phosphorylated.

Its subcellular location is the mitochondrion. The protein resides in the mitochondrion matrix. It carries out the reaction 1-octadecanoyl-2-(5Z,8Z,11Z,14Z-eicosatetraenoyl)-sn-glycerol + H2O = 2-(5Z,8Z,11Z,14Z-eicosatetraenoyl)-glycerol + octadecanoate + H(+). It catalyses the reaction a 1,2-diacyl-sn-glycerol + H2O = a 2-acylglycerol + a fatty acid + H(+). The catalysed reaction is a 1,3-diacyl-sn-glycerol + H2O = a 1-acyl-sn-glycerol + a fatty acid + H(+). The enzyme catalyses 1-octadecanoyl-2-(9Z-octadecenoyl)-sn-glycerol + H2O = 2-(9Z-octadecenoyl)-glycerol + octadecanoate + H(+). It carries out the reaction 1-octadecanoyl-2-(4Z,7Z,10Z,13Z,16Z,19Z-docosahexaenoyl)-sn-glycerol + H2O = 2-(4Z,7Z,10Z,13Z,16Z,19Z-docosahexaenoyl)-glycerol + octadecanoate + H(+). It catalyses the reaction 1,2-didecanoylglycerol + H2O = decanoylglycerol + decanoate + H(+). Catalyzes the hydrolysis of diacylglycerol in vitro and may function as a key regulator in lipid metabolism, namely by regulating the intracellular levels of diacylglycerol. 1,2-diacyl-sn-glycerols are the preferred substrate over 1,3-diacyl-sn-glycerols. The enzyme hydrolyzes stearate in preference to palmitate from the sn-1 position of 1,2-diacyl-sn-glycerols. This chain is sn-1-specific diacylglycerol lipase ABHD11, found in Xenopus tropicalis (Western clawed frog).